The following is a 54-amino-acid chain: Sperm protamine P3 (54 aa).

A disordered region spans residues 1 to 54 (RRRRRRGKGKGGKKKKGKKRRRRGRKGKGKGKKKGKRKGKRGGKRRRRRRKGKK).

Gonads.

It is found in the nucleus. The protein localises to the chromosome. Functionally, protamines substitute for histones in the chromatin of sperm during the haploid phase of spermatogenesis. They compact sperm DNA into a highly condensed, stable and inactive complex. This is Sperm protamine P3 from Bolinus brandaris (Purple dye murex).